The primary structure comprises 370 residues: Histidinol-phosphate aminotransferase 2 (370 aa).

At Lys230 the chain carries N6-(pyridoxal phosphate)lysine.

Belongs to the class-II pyridoxal-phosphate-dependent aminotransferase family. Histidinol-phosphate aminotransferase subfamily. As to quaternary structure, homodimer. The cofactor is pyridoxal 5'-phosphate.

It catalyses the reaction L-histidinol phosphate + 2-oxoglutarate = 3-(imidazol-4-yl)-2-oxopropyl phosphate + L-glutamate. It functions in the pathway amino-acid biosynthesis; L-histidine biosynthesis; L-histidine from 5-phospho-alpha-D-ribose 1-diphosphate: step 7/9. The polypeptide is Histidinol-phosphate aminotransferase 2 (Pseudomonas fluorescens (strain ATCC BAA-477 / NRRL B-23932 / Pf-5)).